The sequence spans 299 residues: MALLKTSLDAPFTKIATGKVRDLYECVEFPDDLLFVATDRISAYDFIMENGIPEKGKVLTKISEFWFDVLKPHVQTHLITSRWEELPPVITKHEELKDRSMLVKKYKILPIEAIVRGYITGSAWKEYQKQGTVHGLNVPTGMKEAEAFPEPLFTPSTKAAEGHDENIHPDEVSKIVGPELAKQVAETSVKLYKIARDVALKKGIIIADTKFEFGVDETTNKIVLVDEVLTPDSSRFWLASDYTVGKSPDSFDKQYLRNWLTANNLANKPNVSLPEDVVEATRRKYVEAYEMITGKKWSY.

The protein belongs to the SAICAR synthetase family.

It catalyses the reaction 5-amino-1-(5-phospho-D-ribosyl)imidazole-4-carboxylate + L-aspartate + ATP = (2S)-2-[5-amino-1-(5-phospho-beta-D-ribosyl)imidazole-4-carboxamido]succinate + ADP + phosphate + 2 H(+). Its pathway is purine metabolism; IMP biosynthesis via de novo pathway; 5-amino-1-(5-phospho-D-ribosyl)imidazole-4-carboxamide from 5-amino-1-(5-phospho-D-ribosyl)imidazole-4-carboxylate: step 1/2. The protein is Phosphoribosylaminoimidazole-succinocarboxamide synthase (ade7) of Schizosaccharomyces pombe (strain 972 / ATCC 24843) (Fission yeast).